Here is a 254-residue protein sequence, read N- to C-terminus: NAD-dependent protein deacetylase 1 (254 aa).

The region spanning 5–254 (ASDLRSGVER…GETLGPFVGN (250 aa)) is the Deacetylase sirtuin-type domain. NAD(+)-binding residues include Ala31, Thr35, Phe42, Arg43, Gln108, Ile110, Asp111, and His128. Phe42 contacts nicotinamide. Residues Ile110 and Asp111 each coordinate nicotinamide. His128 acts as the Proton acceptor in catalysis. 4 residues coordinate Zn(2+): Cys136, Cys139, Cys160, and Cys163. Residues Ser201, Ser202, Asn226, Asp243, and Ile244 each coordinate NAD(+).

This sequence belongs to the sirtuin family. Class U subfamily. Zn(2+) is required as a cofactor.

Its subcellular location is the cytoplasm. It catalyses the reaction N(6)-acetyl-L-lysyl-[protein] + NAD(+) + H2O = 2''-O-acetyl-ADP-D-ribose + nicotinamide + L-lysyl-[protein]. Functionally, NAD-dependent protein deacetylase which modulates the activities of several enzymes which are inactive in their acetylated form. This chain is NAD-dependent protein deacetylase 1, found in Bradyrhizobium diazoefficiens (strain JCM 10833 / BCRC 13528 / IAM 13628 / NBRC 14792 / USDA 110).